A 381-amino-acid chain; its full sequence is Zinc finger CCCH domain-containing protein 61 (381 aa).

Positions 1–39 (MDVEHHKSGHISRPTVDIPPRKLLSSAKSPSSVSSPLRD) are disordered. Positions 21-37 (RKLLSSAKSPSSVSSPL) are enriched in low complexity. C3H1-type zinc fingers lie at residues 101–128 (YTGE…HGVF) and 137–159 (YRTE…AHSP).

Interacts with MARD1/FLZ9 and RD21A via its CCCH zing finger domains.

Its subcellular location is the cytoplasm. The protein localises to the stress granule. It localises to the P-body. This chain is Zinc finger CCCH domain-containing protein 61, found in Arabidopsis thaliana (Mouse-ear cress).